Consider the following 101-residue polypeptide: Iron-sulfur cluster assembly protein CyaY (101 aa).

The protein belongs to the frataxin family.

Its function is as follows. Involved in iron-sulfur (Fe-S) cluster assembly. May act as a regulator of Fe-S biogenesis. This is Iron-sulfur cluster assembly protein CyaY from Actinobacillus pleuropneumoniae serotype 5b (strain L20).